A 534-amino-acid polypeptide reads, in one-letter code: UDP-glucuronosyltransferase 1A3 (534 aa).

Positions 1 to 28 (MATGLQVPLPWLATGLLLLLSVQPWAES) are cleaved as a signal peptide. Residues Asn119, Asn142, Asn296, and Asn348 are each glycosylated (N-linked (GlcNAc...) asparagine). Residues 492–508 (VIGFLLAVVLTVAFITF) form a helical membrane-spanning segment.

The protein belongs to the UDP-glycosyltransferase family. Homodimer. Homooligomer. Interacts with UGT1A1, UGT1A4, UGT1A6, UGT1A7, UGT1A8, UGT1A9 and UGT1A10 to form heterodimers. Isoform 1 interacts with isoform 2/i2 suggesting that oligomerization is involved in negative regulation of transferase activity by isoform 2. Isoform 1 also interacts with respective i2 isoforms of UGT1A1, UGT1A4, UGT1A6, UGT1A7, UGT1A8, UGT1A9 and UGT1A10. Expressed in liver, kidney, colon, esophagus and small intestine. In terms of tissue distribution, expressed in liver, kidney and colon. Not expressed in esophagus and small intestine.

It localises to the endoplasmic reticulum membrane. It catalyses the reaction glucuronate acceptor + UDP-alpha-D-glucuronate = acceptor beta-D-glucuronoside + UDP + H(+). It carries out the reaction 17beta-estradiol + UDP-alpha-D-glucuronate = 17beta-estradiol 3-O-(beta-D-glucuronate) + UDP + H(+). The enzyme catalyses 17beta-estradiol + UDP-alpha-D-glucuronate = 17beta-estradiol 17-O-(beta-D-glucuronate) + UDP + H(+). The catalysed reaction is 17alpha-estradiol + UDP-alpha-D-glucuronate = 17alpha-estradiol 3-O-(beta-D-glucuronate) + UDP + H(+). It catalyses the reaction estrone + UDP-alpha-D-glucuronate = estrone 3-O-(beta-D-glucuronate) + UDP + H(+). It carries out the reaction chenodeoxycholate + UDP-alpha-D-glucuronate = chenodeoxycholoyl-24-O-(beta-D-glucuronate) + UDP. The enzyme catalyses deoxycholate + UDP-alpha-D-glucuronate = deoxycholoyl-24-O-(beta-D-glucuronate) + UDP. The catalysed reaction is lithocholate + UDP-alpha-D-glucuronate = lithocholoyl-24-O-(beta-D-glucuronate) + UDP. It catalyses the reaction hyodeoxycholate + UDP-alpha-D-glucuronate = hyodeoxycholoyl-24-O-(beta-D-glucuronate) + UDP. It carries out the reaction hyocholate + UDP-alpha-D-glucuronate = hyocholoyl-24-O-(beta-D-glucuronate) + UDP. The enzyme catalyses calcidiol + UDP-alpha-D-glucuronate = calcidiol 25-O-(beta-D-glucuronide) + UDP + H(+). The catalysed reaction is (E)-ferulate + UDP-alpha-D-glucuronate = (E)-4-O-(beta-D-glucuronosyl)-ferulate + UDP + H(+). It catalyses the reaction (E)-ferulate + UDP-alpha-D-glucuronate = (E)-ferulic acid beta-D-glucuronate ester + UDP. It carries out the reaction losartan + UDP-alpha-D-glucuronate = losartan-2-N-beta-D-glucuronide + UDP. The enzyme catalyses candesartan + UDP-alpha-D-glucuronate = candesartan-2-N-beta-D-glucuronide + UDP. The catalysed reaction is zolasartan + UDP-alpha-D-glucuronate = zolarsartan-2-N-beta-D-glucuronide + UDP. In terms of biological role, UDP-glucuronosyltransferase (UGT) that catalyzes phase II biotransformation reactions in which lipophilic substrates are conjugated with glucuronic acid to increase the metabolite's water solubility, thereby facilitating excretion into either the urine or bile. Essential for the elimination and detoxification of drugs, xenobiotics and endogenous compounds. Catalyzes the glucuronidation of endogenous estrogen hormones such as estradiol and estrone. Contributes to bile acid (BA) detoxification by catalyzing the glucuronidation of BA substrates, which are natural detergents for dietary lipids absorption. Involved in the glucuronidation of calcidiol, which is the major circulating form of vitamin D3, essential for the regulation of calcium and phosphate homeostasis. Involved in the glucuronidation of the phytochemical ferulic acid at the phenolic or the carboxylic acid group. Involved in the glucuronidation of the AGTR1 angiotensin receptor antagonists losartan, candesartan and zolarsartan, which can inhibit the effect of angiotensin II. Lacks UDP-glucuronosyltransferase (UGT) activity but acts as a negative regulator of isoform 1. The protein is UDP-glucuronosyltransferase 1A3 of Homo sapiens (Human).